Reading from the N-terminus, the 545-residue chain is Thermosome subunit (545 aa).

Belongs to the TCP-1 chaperonin family. In terms of assembly, forms an oligomeric complex of eight-membered rings.

In terms of biological role, molecular chaperone; binds unfolded polypeptides in vitro, and has a weak ATPase activity. This chain is Thermosome subunit (ths), found in Methanopyrus kandleri (strain AV19 / DSM 6324 / JCM 9639 / NBRC 100938).